The following is a 1398-amino-acid chain: DNA topoisomerase 2 (1398 aa).

ATP contacts are provided by residues asparagine 69, asparagine 103, 131-133 (SDN), and 144-151 (GRNGFGAK). Residues 260 to 317 (NSNDNKNNKGQNDNNNNNNNNNDENANQNNDNLDVSLSNEPADGTPTKNNNNNNNNND) form a disordered region. Residues 267–291 (NKGQNDNNNNNNNNNDENANQNNDN) are compositionally biased toward low complexity. 411–413 (QTK) is a binding site for ATP. Positions 493–608 (CTLILTEGDS…SLLKHKGFLS (116 aa)) constitute a Toprim domain. Mg(2+)-binding residues include glutamate 499, aspartate 577, and aspartate 579. One can recognise a Topo IIA-type catalytic domain in the interval 739–1191 (IPNIMDGWKP…TVETMWLKDI (453 aa)). The O-(5'-phospho-DNA)-tyrosine intermediate role is filled by tyrosine 830. The interaction with DNA stretch occupies residues 1012–1021 (KLKSTLTTTN). Disordered stretches follow at residues 1214 to 1250 (KFKVARKQGPSSMKKKKKKKKLSSDEESEGGDTSDSS) and 1262 to 1361 (NTNK…NSSI). Positions 1262-1276 (NTNKKTTTSSNNVNN) are enriched in low complexity. 2 stretches are compositionally biased toward polar residues: residues 1287–1300 (LNSNELDNTLSVSK) and 1348–1357 (DSTNDNNSEL).

The protein belongs to the type II topoisomerase family. Homodimer. Requires Mg(2+) as cofactor. The cofactor is Mn(2+). Ca(2+) is required as a cofactor.

The protein localises to the nucleus. It carries out the reaction ATP-dependent breakage, passage and rejoining of double-stranded DNA.. Control of topological states of DNA by transient breakage and subsequent rejoining of DNA strands. Topoisomerase II makes double-strand breaks. In Plasmodium falciparum (isolate K1 / Thailand), this protein is DNA topoisomerase 2 (TOP2).